The sequence spans 147 residues: Large ribosomal subunit protein bL9 (147 aa).

This sequence belongs to the bacterial ribosomal protein bL9 family.

Its function is as follows. Binds to the 23S rRNA. The polypeptide is Large ribosomal subunit protein bL9 (Clostridium tetani (strain Massachusetts / E88)).